Consider the following 392-residue polypeptide: GTPase Obg (392 aa).

The 159-residue stretch at Met-1 to Leu-159 folds into the Obg domain. Residues Ala-160–Glu-333 form the OBG-type G domain. GTP contacts are provided by residues Gly-166–Ser-173, Phe-191–Val-195, Asp-213–Gly-216, Asn-283–Asp-286, and Ser-314–Ala-316. Mg(2+)-binding residues include Ser-173 and Thr-193. Positions Ser-361–Pro-392 are disordered. Positions Phe-365–Val-386 are enriched in acidic residues.

The protein belongs to the TRAFAC class OBG-HflX-like GTPase superfamily. OBG GTPase family. Monomer. Mg(2+) serves as cofactor.

The protein resides in the cytoplasm. Its function is as follows. An essential GTPase which binds GTP, GDP and possibly (p)ppGpp with moderate affinity, with high nucleotide exchange rates and a fairly low GTP hydrolysis rate. Plays a role in control of the cell cycle, stress response, ribosome biogenesis and in those bacteria that undergo differentiation, in morphogenesis control. The chain is GTPase Obg from Histophilus somni (strain 2336) (Haemophilus somnus).